Reading from the N-terminus, the 1055-residue chain is Endo-1,4-beta-xylanase A (1055 aa).

Positions 1 to 29 (MRKKRRGFLNASTAVLVGILAGFLGVVLA) are cleaved as a signal peptide. The segment at 30–357 (ATGALGFAVR…TTSAEIKLEM (328 aa)) is a. Positions 360-688 (EEEIPALKDV…KLAYWAIVAP (329 aa)) constitute a GH10 domain. E498 (proton donor) is an active-site residue. The Nucleophile role is filled by E604. CBM-cenC domains follow at residues 720 to 851 (PIEI…TNSQ) and 895 to 1040 (KSVA…PTNN).

The protein belongs to the glycosyl hydrolase 10 (cellulase F) family.

The catalysed reaction is Endohydrolysis of (1-&gt;4)-beta-D-xylosidic linkages in xylans.. In Thermotoga neapolitana, this protein is Endo-1,4-beta-xylanase A (xynA).